The primary structure comprises 214 residues: 3,4-dihydroxy-2-butanone 4-phosphate synthase (214 aa).

Residues 37–38 (RE), Asp42, 150–154 (RPGHT), and Glu174 contribute to the D-ribulose 5-phosphate site. Residue Glu38 participates in Mg(2+) binding. A Mg(2+)-binding site is contributed by His153.

Belongs to the DHBP synthase family. As to quaternary structure, homodimer. The cofactor is Mg(2+). Mn(2+) serves as cofactor.

The catalysed reaction is D-ribulose 5-phosphate = (2S)-2-hydroxy-3-oxobutyl phosphate + formate + H(+). It functions in the pathway cofactor biosynthesis; riboflavin biosynthesis; 2-hydroxy-3-oxobutyl phosphate from D-ribulose 5-phosphate: step 1/1. Functionally, catalyzes the conversion of D-ribulose 5-phosphate to formate and 3,4-dihydroxy-2-butanone 4-phosphate. The polypeptide is 3,4-dihydroxy-2-butanone 4-phosphate synthase (Mannheimia succiniciproducens (strain KCTC 0769BP / MBEL55E)).